Reading from the N-terminus, the 597-residue chain is Kelch-like protein 21 (597 aa).

The region spanning 35–103 (LDVTLEAAGG…SYTGRVAVSG (69 aa)) is the BTB domain. One can recognise a BACK domain in the interval 138–239 (CLDMQDFAEA…RRFYLLAHVE (102 aa)). 6 Kelch repeats span residues 287-335 (ILVL…ALGN), 336-382 (DIYV…VLNG), 384-422 (LYVV…ACRG), 423-470 (RLYA…TLNG), 472-512 (MYFV…ALGG), and 513-560 (KLYV…SIFR). The interval 570–597 (GRGFELNSGSSDVDAGHHRLPQNPEELQ) is disordered.

As to quaternary structure, component of the BCR(KLHL21) E3 ubiquitin ligase complex, at least composed of CUL3, KLHL21 and RBX1.

It is found in the cytoplasm. Its subcellular location is the cytoskeleton. The protein resides in the spindle. The protein operates within protein modification; protein ubiquitination. Its function is as follows. Substrate-specific adapter of BCR (BTB-CUL3-RBX1) E3 ubiquitin-protein ligase complex required for efficient chromosome alignment and cytokinesis. The BCR(KLHL21) E3 ubiquitin ligase complex regulates localization of the chromosomal passenger complex (CPC) from chromosomes to the spindle midzone in anaphase and mediates the ubiquitination of AURKB. Ubiquitination of AURKB by BCR(KLHL21) E3 ubiquitin ligase complex may not lead to its degradation by the proteasome. This Rattus norvegicus (Rat) protein is Kelch-like protein 21 (Klhl21).